The primary structure comprises 374 residues: Isocitrate dehydrogenase [NAD] catalytic subunit 5, mitochondrial (374 aa).

Residues 1-44 constitute a mitochondrion transit peptide; that stretch reads MTMAANLARRLIGNRSTQILGAVNSSSGAASSVARAFCSSTTPI. Substrate contacts are provided by R127, R137, R158, and D245. Mg(2+) is bound by residues D245, D269, and D273.

This sequence belongs to the isocitrate and isopropylmalate dehydrogenases family. Heterooligomer of catalytic and regulatory subunits. It depends on Mg(2+) as a cofactor. The cofactor is Mn(2+). Ubiquitous.

It localises to the mitochondrion. It catalyses the reaction D-threo-isocitrate + NAD(+) = 2-oxoglutarate + CO2 + NADH. In terms of biological role, performs an essential role in the oxidative function of the citric acid cycle. This is Isocitrate dehydrogenase [NAD] catalytic subunit 5, mitochondrial (IDH5) from Arabidopsis thaliana (Mouse-ear cress).